The chain runs to 120 residues: Large ribosomal subunit protein uL18 (120 aa).

It belongs to the universal ribosomal protein uL18 family. As to quaternary structure, part of the 50S ribosomal subunit; part of the 5S rRNA/L5/L18/L25 subcomplex. Contacts the 5S and 23S rRNAs.

This is one of the proteins that bind and probably mediate the attachment of the 5S RNA into the large ribosomal subunit, where it forms part of the central protuberance. The chain is Large ribosomal subunit protein uL18 from Geobacillus sp. (strain WCH70).